Here is a 202-residue protein sequence, read N- to C-terminus: D-alanyl-D-alanine dipeptidase (202 aa).

Residues His116 and Asp123 each coordinate Zn(2+). Residue Glu181 is the Proton donor/acceptor of the active site. Zn(2+) is bound at residue His184.

It belongs to the peptidase M15D family. The cofactor is Zn(2+).

The enzyme catalyses D-alanyl-D-alanine + H2O = 2 D-alanine. Catalyzes hydrolysis of the D-alanyl-D-alanine dipeptide. The protein is D-alanyl-D-alanine dipeptidase (vanXB) of Enterococcus faecalis (strain ATCC 700802 / V583).